Reading from the N-terminus, the 103-residue chain is Co-chaperonin GroES (103 aa).

It belongs to the GroES chaperonin family. Heptamer of 7 subunits arranged in a ring. Interacts with the chaperonin GroEL.

Its subcellular location is the cytoplasm. Together with the chaperonin GroEL, plays an essential role in assisting protein folding. The GroEL-GroES system forms a nano-cage that allows encapsulation of the non-native substrate proteins and provides a physical environment optimized to promote and accelerate protein folding. GroES binds to the apical surface of the GroEL ring, thereby capping the opening of the GroEL channel. The chain is Co-chaperonin GroES from Synechococcus sp. (strain JA-2-3B'a(2-13)) (Cyanobacteria bacterium Yellowstone B-Prime).